Here is a 66-residue protein sequence, read N- to C-terminus: Small ribosomal subunit protein bS21A (66 aa).

Over residues 34–46 the composition is skewed to basic residues; it reads KHYEKPSVKKKRK. The segment at 34–66 is disordered; that stretch reads KHYEKPSVKKKRKQMEAERKRRKAQRFRKPDRD.

The protein belongs to the bacterial ribosomal protein bS21 family.

The polypeptide is Small ribosomal subunit protein bS21A (Geobacter sulfurreducens (strain ATCC 51573 / DSM 12127 / PCA)).